The sequence spans 145 residues: Hemoglobin subunit beta-A (145 aa).

Positions 1-145 constitute a Globin domain; that stretch reads MLTAEEKAAV…VANALAHRYH (145 aa). Heme b-binding residues include His62 and His91.

The protein belongs to the globin family. Heterotetramer of two alpha chains and two beta chains. In terms of tissue distribution, red blood cells.

Its function is as follows. Involved in oxygen transport from the lung to the various peripheral tissues. This chain is Hemoglobin subunit beta-A, found in Bos javanicus (Wild banteng).